A 157-amino-acid polypeptide reads, in one-letter code: Protein Smg homolog (157 aa).

Belongs to the Smg family.

This chain is Protein Smg homolog, found in Shewanella denitrificans (strain OS217 / ATCC BAA-1090 / DSM 15013).